We begin with the raw amino-acid sequence, 20 residues long: Hemocyanin subunit II (20 aa).

The interval 1–20 is disordered; that stretch reads DVVASSTAHKQQDINHLLDK. Positions 10–20 are enriched in basic and acidic residues; the sequence is KQQDINHLLDK.

The protein belongs to the tyrosinase family. Hemocyanin subfamily. As to quaternary structure, composed of 3 major subunits (IB, II and III) and 1 minor subunit (IA) which form homohexamers and heterohexamers. May also form larger structures. In terms of tissue distribution, hemolymph.

It is found in the secreted. It localises to the extracellular space. Its function is as follows. Hemocyanins are copper-containing oxygen carriers occurring freely dissolved in the hemolymph of many mollusks and arthropods. This is Hemocyanin subunit II from Panulirus japonicus (Japanese spiny lobster).